Here is a 554-residue protein sequence, read N- to C-terminus: Potassium-transporting ATPase potassium-binding subunit (554 aa).

10 helical membrane passes run 1–21, 60–80, 131–151, 174–194, 246–266, 279–299, 375–395, 412–432, 481–501, and 525–545; these read MSPV…LALA, PAYL…LYVL, GLAV…VALV, VRVL…CGAI, PGPF…FALT, GYAI…LMMW, GLYG…LMVG, FAAC…AAAM, IGIV…ALAG, and GLLV…ALAL.

Belongs to the KdpA family. In terms of assembly, the system is composed of three essential subunits: KdpA, KdpB and KdpC.

Its subcellular location is the cell membrane. Functionally, part of the high-affinity ATP-driven potassium transport (or Kdp) system, which catalyzes the hydrolysis of ATP coupled with the electrogenic transport of potassium into the cytoplasm. This subunit binds the extracellular potassium ions and delivers the ions to the membrane domain of KdpB through an intramembrane tunnel. This Streptomyces avermitilis (strain ATCC 31267 / DSM 46492 / JCM 5070 / NBRC 14893 / NCIMB 12804 / NRRL 8165 / MA-4680) protein is Potassium-transporting ATPase potassium-binding subunit.